Here is a 509-residue protein sequence, read N- to C-terminus: Histidine ammonia-lyase (509 aa).

The segment at residues Ala142–Gly144 is a cross-link (5-imidazolinone (Ala-Gly)). The residue at position 143 (Ser143) is a 2,3-didehydroalanine (Ser).

It belongs to the PAL/histidase family. In terms of processing, contains an active site 4-methylidene-imidazol-5-one (MIO), which is formed autocatalytically by cyclization and dehydration of residues Ala-Ser-Gly.

It localises to the cytoplasm. The catalysed reaction is L-histidine = trans-urocanate + NH4(+). It participates in amino-acid degradation; L-histidine degradation into L-glutamate; N-formimidoyl-L-glutamate from L-histidine: step 1/3. The protein is Histidine ammonia-lyase of Pseudomonas aeruginosa (strain UCBPP-PA14).